The following is a 600-amino-acid chain: Probable methyltransferase PMT7 (600 aa).

Topologically, residues 1-15 are cytoplasmic; that stretch reads MGGGYVLFGSARSGQ. A helical; Signal-anchor for type II membrane protein transmembrane segment spans residues 16–36; the sequence is MIMVALVLMVGSFYAGSIFGN. At 37 to 600 the chain is on the lumenal side; the sequence is NSPIYISQPS…FCRKKFWAIL (564 aa). N-linked (GlcNAc...) asparagine glycans are attached at residues Asn49, Asn98, Asn110, Asn157, Asn200, Asn204, Asn334, Asn447, and Asn484.

The protein belongs to the methyltransferase superfamily.

Its subcellular location is the golgi apparatus membrane. This is Probable methyltransferase PMT7 from Arabidopsis thaliana (Mouse-ear cress).